Reading from the N-terminus, the 141-residue chain is Ribosome-binding factor A (141 aa).

Belongs to the RbfA family. As to quaternary structure, monomer. Binds 30S ribosomal subunits, but not 50S ribosomal subunits or 70S ribosomes.

Its subcellular location is the cytoplasm. One of several proteins that assist in the late maturation steps of the functional core of the 30S ribosomal subunit. Associates with free 30S ribosomal subunits (but not with 30S subunits that are part of 70S ribosomes or polysomes). Required for efficient processing of 16S rRNA. May interact with the 5'-terminal helix region of 16S rRNA. This is Ribosome-binding factor A from Maricaulis maris (strain MCS10) (Caulobacter maris).